Consider the following 186-residue polypeptide: Elongation factor P (186 aa).

Belongs to the elongation factor P family.

It localises to the cytoplasm. It functions in the pathway protein biosynthesis; polypeptide chain elongation. In terms of biological role, involved in peptide bond synthesis. Stimulates efficient translation and peptide-bond synthesis on native or reconstituted 70S ribosomes in vitro. Probably functions indirectly by altering the affinity of the ribosome for aminoacyl-tRNA, thus increasing their reactivity as acceptors for peptidyl transferase. This Neisseria gonorrhoeae (strain NCCP11945) protein is Elongation factor P.